Consider the following 705-residue polypeptide: Polyribonucleotide nucleotidyltransferase (705 aa).

The Mg(2+) site is built by Asp-494 and Asp-500. Positions 561–620 constitute a KH domain; sequence PRITTVKVKPEKVRAVIGTGGKNIRQIVSETGVTIDVEDDGTVTIASSDMEASARAIAMV. An S1 motif domain is found at 630–698; the sequence is GKIYRGTVKK…KQGKIRLSRK (69 aa).

This sequence belongs to the polyribonucleotide nucleotidyltransferase family. The cofactor is Mg(2+).

It localises to the cytoplasm. It catalyses the reaction RNA(n+1) + phosphate = RNA(n) + a ribonucleoside 5'-diphosphate. Involved in mRNA degradation. Catalyzes the phosphorolysis of single-stranded polyribonucleotides processively in the 3'- to 5'-direction. The sequence is that of Polyribonucleotide nucleotidyltransferase from Syntrophus aciditrophicus (strain SB).